A 389-amino-acid chain; its full sequence is Na(+)/H(+) antiporter NhaA 1 (389 aa).

11 helical membrane passes run 12–32 (VLNE…ALLV), 62–82 (FLLW…GLEL), 97–117 (IVLP…LFAL), 128–148 (GWAI…MMCG), 157–177 (IFLL…IAIF), 184–204 (IVAF…NLLG), 220–240 (ISVL…AFFI), 260–280 (FWIA…VNLS), 282–302 (IDIG…LFVG), 331–351 (LYGV…IDGL), and 365–385 (LAIL…LKFF).

Belongs to the NhaA Na(+)/H(+) (TC 2.A.33) antiporter family.

It localises to the cell inner membrane. The catalysed reaction is Na(+)(in) + 2 H(+)(out) = Na(+)(out) + 2 H(+)(in). Its function is as follows. Na(+)/H(+) antiporter that extrudes sodium in exchange for external protons. This Campylobacter jejuni (strain RM1221) protein is Na(+)/H(+) antiporter NhaA 1.